The following is a 503-amino-acid chain: Aspartyl/glutamyl-tRNA(Asn/Gln) amidotransferase subunit B (503 aa).

The protein belongs to the GatB/GatE family. GatB subfamily. In terms of assembly, heterotrimer of A, B and C subunits.

It carries out the reaction L-glutamyl-tRNA(Gln) + L-glutamine + ATP + H2O = L-glutaminyl-tRNA(Gln) + L-glutamate + ADP + phosphate + H(+). It catalyses the reaction L-aspartyl-tRNA(Asn) + L-glutamine + ATP + H2O = L-asparaginyl-tRNA(Asn) + L-glutamate + ADP + phosphate + 2 H(+). Its function is as follows. Allows the formation of correctly charged Asn-tRNA(Asn) or Gln-tRNA(Gln) through the transamidation of misacylated Asp-tRNA(Asn) or Glu-tRNA(Gln) in organisms which lack either or both of asparaginyl-tRNA or glutaminyl-tRNA synthetases. The reaction takes place in the presence of glutamine and ATP through an activated phospho-Asp-tRNA(Asn) or phospho-Glu-tRNA(Gln). This chain is Aspartyl/glutamyl-tRNA(Asn/Gln) amidotransferase subunit B, found in Cereibacter sphaeroides (strain ATCC 17029 / ATH 2.4.9) (Rhodobacter sphaeroides).